A 642-amino-acid chain; its full sequence is Threonine--tRNA ligase (642 aa).

One can recognise a TGS domain in the interval 1-61; the sequence is MPVITLPDGS…ETDAELSIIT (61 aa). Residues 243 to 534 form a catalytic region; that stretch reads DHRKIGKQLD…LIEEYAGRFP (292 aa). 3 residues coordinate Zn(2+): Cys-334, His-385, and His-511.

It belongs to the class-II aminoacyl-tRNA synthetase family. In terms of assembly, homodimer. The cofactor is Zn(2+).

It localises to the cytoplasm. The enzyme catalyses tRNA(Thr) + L-threonine + ATP = L-threonyl-tRNA(Thr) + AMP + diphosphate + H(+). Functionally, catalyzes the attachment of threonine to tRNA(Thr) in a two-step reaction: L-threonine is first activated by ATP to form Thr-AMP and then transferred to the acceptor end of tRNA(Thr). Also edits incorrectly charged L-seryl-tRNA(Thr). This is Threonine--tRNA ligase from Shewanella oneidensis (strain ATCC 700550 / JCM 31522 / CIP 106686 / LMG 19005 / NCIMB 14063 / MR-1).